Consider the following 110-residue polypeptide: uncharacterized protein (110 aa).

Its subcellular location is the plastid. It localises to the chloroplast. This is an uncharacterized protein from Auxenochlorella pyrenoidosa (Freshwater green alga).